The sequence spans 253 residues: Negative modulator of initiation of replication (253 aa).

The tract at residues 66–112 (SNQEQQTGHGHAGEPSAVQTPESNDYAKAQPHSSGYQPGQLEGHKSE) is disordered. The interaction with DNA stretch occupies residues 154–155 (AV).

Belongs to the SeqA family. In terms of assembly, homodimer. Polymerizes to form helical filaments.

Its subcellular location is the cytoplasm. Functionally, negative regulator of replication initiation, which contributes to regulation of DNA replication and ensures that replication initiation occurs exactly once per chromosome per cell cycle. Binds to pairs of hemimethylated GATC sequences in the oriC region, thus preventing assembly of replication proteins and re-initiation at newly replicated origins. Repression is relieved when the region becomes fully methylated. This Shewanella denitrificans (strain OS217 / ATCC BAA-1090 / DSM 15013) protein is Negative modulator of initiation of replication.